We begin with the raw amino-acid sequence, 164 residues long: Small ribosomal subunit protein uS5 (164 aa).

An S5 DRBM domain is found at 9–72 (YQEKLLKISR…AAAKKNIVKI (64 aa)).

This sequence belongs to the universal ribosomal protein uS5 family. Part of the 30S ribosomal subunit. Contacts proteins S4 and S8.

Its function is as follows. With S4 and S12 plays an important role in translational accuracy. Located at the back of the 30S subunit body where it stabilizes the conformation of the head with respect to the body. The protein is Small ribosomal subunit protein uS5 of Fusobacterium nucleatum subsp. nucleatum (strain ATCC 25586 / DSM 15643 / BCRC 10681 / CIP 101130 / JCM 8532 / KCTC 2640 / LMG 13131 / VPI 4355).